We begin with the raw amino-acid sequence, 992 residues long: Disks large-associated protein 4 (992 aa).

Basic and acidic residues predominate over residues 1-20; it reads MKGLGDSRPRHLSDSLDPPH. 2 disordered regions span residues 1–31 and 157–225; these read MKGLGDSRPRHLSDSLDPPHEPLFAGPDRNP and MEGT…PASG. Residues 162–171 show a composition bias toward gly residues; that stretch reads GKVGGNGSKK. A compositionally biased stretch (basic and acidic residues) spans 172–194; that stretch reads GGLEDGKGRRAKSKERAKAGEPK. Polar residues predominate over residues 199 to 208; it reads SNISGWWSSD. Phosphoserine is present on residues serine 206 and serine 207. Omega-N-methylarginine is present on arginine 290. Positions 342-396 are disordered; that stretch reads TTLLSPRDMDSTAEGPIPCRRMRSGSYIKAMGDEDSDESGGGSPKPSPKTAARRQ. Phosphoserine is present on residues serine 377, serine 380, serine 384, serine 388, serine 405, serine 415, and serine 421. 3 disordered regions span residues 527–751, 763–798, and 915–992; these read SVSL…GPRQ, SYGDNSDPALEASSLPPPDPWLETSSSSPAEPAQPG, and TPEK…QTRL. Low complexity predominate over residues 528–554; it reads VSLQSLSPPPSTGSLSNSRTLPSSSCL. Over residues 576-591 the composition is skewed to polar residues; the sequence is VTVQSSTESAQDTYLD. Phosphoserine occurs at positions 580, 581, 609, 611, 665, and 744. Positions 600–620 are enriched in low complexity; it reads TSQSGLSNSSDSLDSSTRPPS. Threonine 915 carries the post-translational modification Phosphothreonine. Composition is skewed to basic and acidic residues over residues 915 to 925 and 940 to 958; these read TPEKRKEEKKP and VSRDKASDAGDKQRQEARK. Residues 969 to 978 are compositionally biased toward polar residues; that stretch reads VRQNSATESA. Serine 973 is subject to Phosphoserine.

It belongs to the SAPAP family. In terms of assembly, interacts with DLG1 and DLG4/PSD-95.

The protein resides in the membrane. Its function is as follows. May play a role in the molecular organization of synapses and neuronal cell signaling. Could be an adapter protein linking ion channel to the subsynaptic cytoskeleton. May induce enrichment of PSD-95/SAP90 at the plasma membrane. This is Disks large-associated protein 4 (Dlgap4) from Mus musculus (Mouse).